Consider the following 333-residue polypeptide: Ornithine carbamoyltransferase (333 aa).

Residues Ser-57–Thr-60, Arg-108, and His-135–Gln-138 contribute to the carbamoyl phosphate site. Residues Asn-168, Asp-232, and Ser-236 to Met-237 contribute to the L-ornithine site. Carbamoyl phosphate-binding positions include Cys-274–Leu-275 and Arg-319.

It belongs to the aspartate/ornithine carbamoyltransferase superfamily. OTCase family.

It localises to the cytoplasm. The enzyme catalyses carbamoyl phosphate + L-ornithine = L-citrulline + phosphate + H(+). It participates in amino-acid degradation; L-arginine degradation via ADI pathway; carbamoyl phosphate from L-arginine: step 2/2. In terms of biological role, reversibly catalyzes the transfer of the carbamoyl group from carbamoyl phosphate (CP) to the N(epsilon) atom of ornithine (ORN) to produce L-citrulline. The polypeptide is Ornithine carbamoyltransferase (Pediococcus pentosaceus (strain ATCC 25745 / CCUG 21536 / LMG 10740 / 183-1w)).